We begin with the raw amino-acid sequence, 160 residues long: Cytochrome b6-f complex subunit 4 (160 aa).

3 consecutive transmembrane segments (helical) span residues 36–56 (ILYMFPVVILGILACDVGLSI), 95–115 (LVGVLSMASVPAGLITVPFIE), and 127–147 (PIATSVFLVGTIVAVWLGIGA).

Belongs to the cytochrome b family. PetD subfamily. In terms of assembly, the 4 large subunits of the cytochrome b6-f complex are cytochrome b6, subunit IV (17 kDa polypeptide, petD), cytochrome f and the Rieske protein, while the 4 small subunits are petG, petL, petM and petN. The complex functions as a dimer.

Its subcellular location is the plastid. It localises to the chloroplast thylakoid membrane. In terms of biological role, component of the cytochrome b6-f complex, which mediates electron transfer between photosystem II (PSII) and photosystem I (PSI), cyclic electron flow around PSI, and state transitions. This Gracilaria tenuistipitata var. liui (Red alga) protein is Cytochrome b6-f complex subunit 4.